Consider the following 253-residue polypeptide: DNA repair protein RecO (253 aa).

It belongs to the RecO family.

Its function is as follows. Involved in DNA repair and RecF pathway recombination. This Staphylococcus epidermidis (strain ATCC 35984 / DSM 28319 / BCRC 17069 / CCUG 31568 / BM 3577 / RP62A) protein is DNA repair protein RecO.